The primary structure comprises 207 residues: Ribosomal RNA small subunit methyltransferase G (207 aa).

S-adenosyl-L-methionine is bound by residues glycine 73, leucine 78, 124 to 125 (VE), and arginine 139.

It belongs to the methyltransferase superfamily. RNA methyltransferase RsmG family.

It is found in the cytoplasm. The catalysed reaction is guanosine(527) in 16S rRNA + S-adenosyl-L-methionine = N(7)-methylguanosine(527) in 16S rRNA + S-adenosyl-L-homocysteine. Its function is as follows. Specifically methylates the N7 position of guanine in position 527 of 16S rRNA. The protein is Ribosomal RNA small subunit methyltransferase G of Salmonella agona (strain SL483).